The chain runs to 289 residues: tRNA dimethylallyltransferase (289 aa).

ATP is bound at residue 9–16 (GTTASGKT). 11 to 16 (TASGKT) provides a ligand contact to substrate. The tract at residues 34–37 (DSLC) is interaction with substrate tRNA.

This sequence belongs to the IPP transferase family. In terms of assembly, monomer. It depends on Mg(2+) as a cofactor.

It carries out the reaction adenosine(37) in tRNA + dimethylallyl diphosphate = N(6)-dimethylallyladenosine(37) in tRNA + diphosphate. In terms of biological role, catalyzes the transfer of a dimethylallyl group onto the adenine at position 37 in tRNAs that read codons beginning with uridine, leading to the formation of N6-(dimethylallyl)adenosine (i(6)A). This is tRNA dimethylallyltransferase from Campylobacter jejuni (strain RM1221).